Consider the following 356-residue polypeptide: Aromatic dipeptide epimerase (356 aa).

Substrate-binding positions include Thr-136 and 161–163 (KVK). Asp-191, Glu-219, and Asp-244 together coordinate Mg(2+). Substrate is bound by residues Lys-268 and 320–322 (DLD).

It belongs to the mandelate racemase/muconate lactonizing enzyme family. It depends on Mg(2+) as a cofactor.

Its function is as follows. Has epimerase activity with a variety of hydrophobic dipeptides (in vitro). Enzyme activity is highest with L-Phe-L-Tyr, but is still relatively low, suggesting that L-Phe-L-Tyr is not the physiological substrate. In Herpetosiphon aurantiacus (strain ATCC 23779 / DSM 785 / 114-95), this protein is Aromatic dipeptide epimerase.